We begin with the raw amino-acid sequence, 370 residues long: GTPase Obg (370 aa).

The Obg domain maps to 1-159 (MKFIDEARIE…RMLRLELKVL (159 aa)). The interval 127–146 (NLHFKSSTNRAPRQKTDGKP) is disordered. Positions 160-334 (ADVGLLGMPN…LCYAIYDYLA (175 aa)) constitute an OBG-type G domain. GTP is bound by residues 166–173 (GMPNAGKS), 191–195 (FTTLA), 213–216 (DIPG), 284–287 (NKLD), and 315–317 (SAL). Residues Ser-173 and Thr-193 each coordinate Mg(2+). The tract at residues 350–370 (ADVRFRDAPPSDGGATSGGDA) is disordered.

This sequence belongs to the TRAFAC class OBG-HflX-like GTPase superfamily. OBG GTPase family. Monomer. Mg(2+) serves as cofactor.

The protein localises to the cytoplasm. In terms of biological role, an essential GTPase which binds GTP, GDP and possibly (p)ppGpp with moderate affinity, with high nucleotide exchange rates and a fairly low GTP hydrolysis rate. Plays a role in control of the cell cycle, stress response, ribosome biogenesis and in those bacteria that undergo differentiation, in morphogenesis control. The protein is GTPase Obg of Burkholderia vietnamiensis (strain G4 / LMG 22486) (Burkholderia cepacia (strain R1808)).